The primary structure comprises 655 residues: Mannosyl-oligosaccharide 1,2-alpha-mannosidase IA (655 aa).

At 1–43 (MPVGGLLPLFSSPGGGGLGSGLGGGLGGGRKGSGPAAFRLTEK) the chain is on the cytoplasmic side. Residues 44-64 (FVLLLVFSAFITLCFGAIFFL) traverse the membrane as a helical; Signal-anchor for type II membrane protein segment. The Lumenal portion of the chain corresponds to 65 to 655 (PDSSKLLSGV…QKKEIDGKEK (591 aa)). Cysteines 478 and 510 form a disulfide. N-linked (GlcNAc...) asparagine glycosylation is present at Asn515. Catalysis depends on Glu524, which acts as the Proton donor. Position 635 (Thr635) interacts with Ca(2+).

The protein belongs to the glycosyl hydrolase 47 family. Requires Ca(2+) as cofactor. N-linked glycan at Asn-515 consists of Man(6)-GlcNAc(2).

It is found in the golgi apparatus membrane. The catalysed reaction is N(4)-(alpha-D-Man-(1-&gt;2)-alpha-D-Man-(1-&gt;2)-alpha-D-Man-(1-&gt;3)-[alpha-D-Man-(1-&gt;2)-alpha-D-Man-(1-&gt;3)-[alpha-D-Man-(1-&gt;2)-alpha-D-Man-(1-&gt;6)]-alpha-D-Man-(1-&gt;6)]-beta-D-Man-(1-&gt;4)-beta-D-GlcNAc-(1-&gt;4)-beta-D-GlcNAc)-L-asparaginyl-[protein] (N-glucan mannose isomer 9A1,2,3B1,2,3) + 4 H2O = N(4)-(alpha-D-Man-(1-&gt;3)-[alpha-D-Man-(1-&gt;3)-[alpha-D-Man-(1-&gt;6)]-alpha-D-Man-(1-&gt;6)]-beta-D-Man-(1-&gt;4)-beta-D-GlcNAc-(1-&gt;4)-beta-D-GlcNAc)-L-asparaginyl-[protein] (N-glucan mannose isomer 5A1,2) + 4 beta-D-mannose. It catalyses the reaction N(4)-(alpha-D-Man-(1-&gt;2)-alpha-D-Man-(1-&gt;2)-alpha-D-Man-(1-&gt;3)-[alpha-D-Man-(1-&gt;3)-[alpha-D-Man-(1-&gt;2)-alpha-D-Man-(1-&gt;6)]-alpha-D-Man-(1-&gt;6)]-beta-D-Man-(1-&gt;4)-beta-D-GlcNAc-(1-&gt;4)-beta-D-GlcNAc)-L-asparaginyl-[protein] (N-glucan mannose isomer 8A1,2,3B1,3) + 3 H2O = N(4)-(alpha-D-Man-(1-&gt;3)-[alpha-D-Man-(1-&gt;3)-[alpha-D-Man-(1-&gt;6)]-alpha-D-Man-(1-&gt;6)]-beta-D-Man-(1-&gt;4)-beta-D-GlcNAc-(1-&gt;4)-beta-D-GlcNAc)-L-asparaginyl-[protein] (N-glucan mannose isomer 5A1,2) + 3 beta-D-mannose. Its pathway is protein modification; protein glycosylation. Its activity is regulated as follows. Inhibited by both 1-deoxymannojirimycin and kifunensine. Its function is as follows. Involved in the maturation of Asn-linked oligosaccharides. Progressively trim alpha-1,2-linked mannose residues from Man(9)GlcNAc(2) to produce Man(5)GlcNAc(2). The polypeptide is Mannosyl-oligosaccharide 1,2-alpha-mannosidase IA (Man1a1) (Mus musculus (Mouse)).